Consider the following 164-residue polypeptide: Phosphopantetheine adenylyltransferase (164 aa).

S9 lines the substrate pocket. Residues 9–10 (SF) and H17 each bind ATP. The substrate site is built by K41, L74, and R88. ATP is bound by residues 89–91 (GIR), E99, and 124–130 (YAEVSST).

Belongs to the bacterial CoaD family. In terms of assembly, homohexamer. Mg(2+) is required as a cofactor.

The protein resides in the cytoplasm. The catalysed reaction is (R)-4'-phosphopantetheine + ATP + H(+) = 3'-dephospho-CoA + diphosphate. The protein operates within cofactor biosynthesis; coenzyme A biosynthesis; CoA from (R)-pantothenate: step 4/5. Its function is as follows. Reversibly transfers an adenylyl group from ATP to 4'-phosphopantetheine, yielding dephospho-CoA (dPCoA) and pyrophosphate. This is Phosphopantetheine adenylyltransferase from Chromobacterium violaceum (strain ATCC 12472 / DSM 30191 / JCM 1249 / CCUG 213 / NBRC 12614 / NCIMB 9131 / NCTC 9757 / MK).